The sequence spans 942 residues: Nuclear receptor coactivator 7 (942 aa).

Residue Met-1 is modified to N-acetylmethionine. Residues 1 to 12 (MDTKEEKKERKQ) are compositionally biased toward basic and acidic residues. The tract at residues 1 to 46 (MDTKEEKKERKQSYFARLKKKKQAKQNAETASAVATRTHTGKEDNN) is disordered. Residues 4-29 (KEEKKERKQSYFARLKKKKQAKQNAE) adopt a coiled-coil conformation. Residues 25 to 38 (KQNAETASAVATRT) show a composition bias toward polar residues. A Phosphoserine modification is found at Ser-89. Positions 114-157 (MEYTAGNQDTLNSIALKFNITPNKLVELNKLFTHTIVPGQVLFV) constitute a LysM domain. The residue at position 134 (Thr-134) is a Phosphothreonine. The segment at 161–188 (NSPSSTLRLSSSSPGATVSPSSSDAEYD) is disordered. Low complexity predominate over residues 162–183 (SPSSTLRLSSSSPGATVSPSSS). Phosphoserine is present on residues Ser-179, Ser-183, Ser-208, Ser-209, and Ser-211. The segment at 324–416 (KFKSINKEKR…ENFLGEDDDF (93 aa)) is disordered. Residues 356 to 368 (GHTPTKPSGSSVS) are compositionally biased toward polar residues. Residues 369–381 (EKLKKLDSSRETS) are compositionally biased toward basic and acidic residues. A phosphoserine mark is found at Ser-441, Ser-500, and Ser-502. The TLDc domain maps to 781-942 (ALLENMHIEQ…VQDLEVWAFD (162 aa)).

This sequence belongs to the OXR1 family. Interacts with ESR1, ESR2A, ESR2B, THRB, PPARG and RARA in a ligand-inducible manner. Interacts with the heterodimer AHR-ARNT. In terms of tissue distribution, highly expressed in brain. Weakly expressed in mammary gland, ovary, uterus, prostate, stomach, bladder, spinal cord and pancreas. Expressed in cancer cell line.

The protein localises to the nucleus. Functionally, enhances the transcriptional activities of several nuclear receptors. Involved in the coactivation of different nuclear receptors, such as ESR1, THRB, PPARG and RARA. This chain is Nuclear receptor coactivator 7 (NCOA7), found in Homo sapiens (Human).